A 753-amino-acid polypeptide reads, in one-letter code: CCR4-NOT transcription complex subunit 3 (753 aa).

Residues 240 to 534 form a disordered region; sequence ATSPPSHSHM…PPQFSTAPEI (295 aa). Residues 257–268 show a composition bias toward low complexity; that stretch reads SSSTPTSTTSSS. The span at 284–293 shows a compositional bias: basic and acidic residues; the sequence is DDKKRGRSTD. Residue T292 is modified to Phosphothreonine. Positions 294 to 315 are enriched in polar residues; that stretch reads SEVSQSPAKNGSKPVHSNQHPQ. A Phosphoserine modification is found at S299. A compositionally biased stretch (pro residues) spans 317-330; it reads PAVPPTYPSGPPPA. The span at 350 to 376 shows a compositional bias: low complexity; that stretch reads PSALGPKASPAPSHNSGTPAPYAQAVA. Positions 396–408 are enriched in gly residues; sequence SGGGGGGSGGGGS. Residues 424 to 433 are compositionally biased toward polar residues; sequence NGATSYSSVV. The span at 441 to 457 shows a compositional bias: low complexity; it reads ALSSSGGNNASSQALGP. The segment covering 458 to 467 has biased composition (pro residues); that stretch reads PSGPHNPPPS. The span at 479 to 491 shows a compositional bias: gly residues; sequence GAGGVAPGSGNNS. S542 is subject to Phosphoserine. The interval 661–753 is repressor domain; it reads EFYQRLSTET…YRYLEDRDLQ (93 aa).

This sequence belongs to the CNOT2/3/5 family. As to quaternary structure, component of the CCR4-NOT complex; distinct complexes seem to exist that differ in the participation of probably mutually exclusive catalytic subunits. In the complex interacts directly with CNOT2. Interacts with TIP120B and NANOS2. Interacts with EBF1. Interacts in an RNA-independent manner with BICC1 (via KH domains). As to expression, ubiquitous. Highly expressed in brain, heart, thymus, spleen, kidney, liver, small intestine, lung and peripheral blood leukocytes.

It localises to the cytoplasm. The protein resides in the nucleus. The protein localises to the P-body. Functionally, component of the CCR4-NOT complex which is one of the major cellular mRNA deadenylases and is linked to various cellular processes including bulk mRNA degradation, miRNA-mediated repression, translational repression during translational initiation and general transcription regulation. Additional complex functions may be a consequence of its influence on mRNA expression. May be involved in metabolic regulation; may be involved in recruitment of the CCR4-NOT complex to deadenylation target mRNAs involved in energy metabolism. Involved in mitotic progression and regulation of the spindle assembly checkpoint by regulating the stability of MAD1L1 mRNA. Can repress transcription and may link the CCR4-NOT complex to transcriptional regulation; the repressive function may involve histone deacetylases. Involved in the maintenance of embryonic stem (ES) cell identity. This is CCR4-NOT transcription complex subunit 3 from Homo sapiens (Human).